The chain runs to 195 residues: Iron-sulfur flavoprotein AF_1519 (195 aa).

Positions 45, 48, 51, and 57 each coordinate [4Fe-4S] cluster.

It belongs to the SsuE family. Isf subfamily. As to quaternary structure, homodimer. FMN serves as cofactor. The cofactor is [4Fe-4S] cluster.

Its function is as follows. Redox-active protein probably involved in electron transport. This is Iron-sulfur flavoprotein AF_1519 from Archaeoglobus fulgidus (strain ATCC 49558 / DSM 4304 / JCM 9628 / NBRC 100126 / VC-16).